The sequence spans 161 residues: Cytochrome b6-f complex subunit 4 (161 aa).

The next 3 membrane-spanning stretches (helical) occupy residues 37 to 57, 96 to 116, and 130 to 150; these read LLYIFPVVIMGTIALVIGLAV, LLGVLMNASIPLGLMLIPFIE, and AMTVFLFGTLVTLWLGIGAAF.

The protein belongs to the cytochrome b family. PetD subfamily. The 4 large subunits of the cytochrome b6-f complex are cytochrome b6, subunit IV (17 kDa polypeptide, PetD), cytochrome f and the Rieske protein, while the 4 small subunits are PetG, PetL, PetM and PetN. The complex functions as a dimer.

The protein resides in the cellular thylakoid membrane. In terms of biological role, component of the cytochrome b6-f complex, which mediates electron transfer between photosystem II (PSII) and photosystem I (PSI), cyclic electron flow around PSI, and state transitions. The protein is Cytochrome b6-f complex subunit 4 of Synechococcus elongatus.